Here is a 240-residue protein sequence, read N- to C-terminus: Uridylate kinase (240 aa).

12-15 contacts ATP; that stretch reads KLSG. Residue glycine 54 coordinates UMP. ATP is bound by residues glycine 55 and arginine 59. UMP-binding positions include aspartate 74 and 135–142; that span reads TGNPFFTT. 3 residues coordinate ATP: threonine 162, tyrosine 168, and aspartate 171.

The protein belongs to the UMP kinase family. Homohexamer.

It is found in the cytoplasm. The catalysed reaction is UMP + ATP = UDP + ADP. It participates in pyrimidine metabolism; CTP biosynthesis via de novo pathway; UDP from UMP (UMPK route): step 1/1. Inhibited by UTP. Its function is as follows. Catalyzes the reversible phosphorylation of UMP to UDP. The chain is Uridylate kinase from Xanthomonas campestris pv. campestris (strain ATCC 33913 / DSM 3586 / NCPPB 528 / LMG 568 / P 25).